A 402-amino-acid polypeptide reads, in one-letter code: Multidrug resistance protein MdtH (402 aa).

The Cytoplasmic portion of the chain corresponds to 1–12 (MSRVSQARNLGK). The chain crosses the membrane as a helical span at residues 13–33 (YFLLIDNMLVVLGFFVVFPLI). Over 34–98 (SIRFVDQMGW…GFATMGIAHE (65 aa)) the chain is Periplasmic. A helical membrane pass occupies residues 99 to 116 (PWLLWFSCLLSGLGGTLF). The Cytoplasmic segment spans residues 117 to 138 (DPPRSALVVKLIRPQQRGRFFS). A helical membrane pass occupies residues 139-159 (LLMMQDSAGAVIGALLGSWLL). Over 160–164 (QYDFR) the chain is Periplasmic. The chain crosses the membrane as a helical span at residues 165 to 185 (LVCATGAVLFVLCAAFNAWLL). Topologically, residues 186-213 (PAWKLSTVRTPVREGMTRVMRDKRFVTY) are cytoplasmic. A helical transmembrane segment spans residues 214–234 (VLTLAGYYMLAVQVMLMLPIM). Topologically, residues 235 to 243 (VNDVAGAPS) are periplasmic. Residues 244–264 (AVKWMYAIEACLSLTLLYPIA) form a helical membrane-spanning segment. Over 265 to 276 (RWSEKHFRLEHR) the chain is Cytoplasmic. Residues 277-297 (LMAGLLIMSLSMMPVGMVSGL) traverse the membrane as a helical segment. The Periplasmic portion of the chain corresponds to 298–299 (QQ). A helical membrane pass occupies residues 300–320 (LFTLICLFYIGSIIAEPARET). The Cytoplasmic portion of the chain corresponds to 321 to 339 (LSASLADARARGSYMGFSR). A helical transmembrane segment spans residues 340-360 (LGLAIGGAIGYIGGGWLFDLG). Over 361 to 367 (KSAHQPE) the chain is Periplasmic. Residues 368–388 (LPWMMLGIIGIFTFLALGWQF) traverse the membrane as a helical segment. At 389 to 402 (SQKRAARRLLERDA) the chain is on the cytoplasmic side.

It belongs to the major facilitator superfamily. DHA1 family. MdtH (TC 2.A.1.2.21) subfamily.

It localises to the cell inner membrane. Functionally, confers resistance to norfloxacin and enoxacin. The sequence is that of Multidrug resistance protein MdtH from Escherichia coli O139:H28 (strain E24377A / ETEC).